Reading from the N-terminus, the 414-residue chain is Putative competence-damage inducible protein (414 aa).

This sequence belongs to the CinA family.

In Listeria monocytogenes serotype 4a (strain HCC23), this protein is Putative competence-damage inducible protein.